Reading from the N-terminus, the 476-residue chain is GTPase Der (476 aa).

EngA-type G domains are found at residues 3–167 and 205–380; these read FTVA…GEER and LRVA…KVWN. Residues 9 to 16, 56 to 60, 119 to 122, 211 to 218, 258 to 262, and 323 to 326 each bind GTP; these read GRPNVGKS, DTAGL, NKSE, GRPNAGKS, DTAGM, and NKWD. The KH-like domain maps to 381-465; that stretch reads RRISTARLNR…PIRVHFRASE (85 aa).

This sequence belongs to the TRAFAC class TrmE-Era-EngA-EngB-Septin-like GTPase superfamily. EngA (Der) GTPase family. In terms of assembly, associates with the 50S ribosomal subunit.

In terms of biological role, GTPase that plays an essential role in the late steps of ribosome biogenesis. In Rhizobium meliloti (strain 1021) (Ensifer meliloti), this protein is GTPase Der.